The following is a 1023-amino-acid chain: Sodium/potassium-transporting ATPase subunit alpha-1 (1023 aa).

Residues 1-5 (MGKGV) constitute a propeptide that is removed on maturation. Positions 1 to 11 (MGKGVGRDKYE) are enriched in basic and acidic residues. Residues 1–38 (MGKGVGRDKYEPAAVSEHGDKKGKKAKKERDMDELKKE) are disordered. At 6–87 (GRDKYEPAAV…NALTPPPTTP (82 aa)) the chain is on the cytoplasmic side. Lys9 bears the N6-acetyllysine mark. Phosphotyrosine is present on Tyr10. At Ser16 the chain carries Phosphoserine; by PKC. Lys21 is subject to N6-acetyllysine. Positions 28-38 (KERDMDELKKE) are enriched in basic and acidic residues. A phosphoserine mark is found at Ser40 and Ser47. A phosphoinositide-3 kinase binding region spans residues 82-84 (PPP). Residues 88 to 108 (EWVKFCRQLFGGFSMLLWIGA) form a helical membrane-spanning segment. Over 109-131 (ILCFLAYGILAATEEDFDNDNLY) the chain is Extracellular. The helical transmembrane segment at 132–152 (LGVVLAAVVIITGCFSYYQEA) threads the bilayer. Residues 153-288 (KSSKIMESFK…GGQTPIAAEI (136 aa)) are Cytoplasmic-facing. The tract at residues 216–235 (SSLTGESEPQTRSPDFTNEN) is disordered. The residue at position 228 (Ser228) is a Phosphoserine. Residue Tyr260 is modified to Phosphotyrosine. The helical transmembrane segment at 289 to 308 (EHFIHIITGVAVFLGVSFFI) threads the bilayer. Topologically, residues 309–320 (LSLILEYTWLEA) are extracellular. The chain crosses the membrane as a helical span at residues 321-338 (VIFLIGIIVANVPEGLLA). Over 339 to 772 (TVTVCLTLTA…EEGRLIFDNL (434 aa)) the chain is Cytoplasmic. Asp376 (4-aspartylphosphate intermediate) is an active-site residue. Phosphoserine occurs at positions 452 and 484. Lys487 provides a ligand contact to ATP. A Phosphotyrosine modification is found at Tyr542. The segment at 596 to 717 (RAAVPDAVGK…QGAIVAVTGD (122 aa)) is mediates interaction with SCN7A. N6-succinyllysine is present on Lys661. A phosphoserine mark is found at Ser668 and Ser675. Mg(2+)-binding residues include Asp717 and Asp721. Residues 773–792 (KKSIAYTLTSNIPEITPFLI) form a helical membrane-spanning segment. At 793 to 802 (FIIANIPLPL) the chain is on the extracellular side. The helical transmembrane segment at 803–823 (GTVTILCIDLGTDMVPAISLA) threads the bilayer. Over 824 to 843 (YEQAESDIMKRQPRNPKTDK) the chain is Cytoplasmic. The chain crosses the membrane as a helical span at residues 844 to 866 (LVNERLISMAYGQIGMIQALGGF). The Extracellular segment spans residues 867 to 918 (FTYFVILAENGFLPFHLLGIRVDWDDRWINDVEDSYGQQWTYEQRKIVEFTC). A helical transmembrane segment spans residues 919-938 (HTAFFVSIVVVQWADLVICK). The Cytoplasmic portion of the chain corresponds to 939–951 (TRRNSVFQQGMKN). Ser943 is modified (phosphoserine; by PKA). Residues 952 to 970 (KILIFGLFEETALAAFLSY) form a helical membrane-spanning segment. The Extracellular segment spans residues 971–985 (CPGMGVALRMYPLKP). A helical transmembrane segment spans residues 986–1006 (TWWFCAFPYSLLIFVYDEIRK). The Cytoplasmic portion of the chain corresponds to 1007-1023 (LIIRRRPGGWVEKETYY).

This sequence belongs to the cation transport ATPase (P-type) (TC 3.A.3) family. Type IIC subfamily. In terms of assembly, the sodium/potassium-transporting ATPase is composed of a catalytic alpha subunit, an auxiliary non-catalytic beta subunit and an additional regulatory subunit. Interacts with regulatory subunit FXYD1. Interacts with regulatory subunit FXYD3. Interacts with SIK1. Interacts with SLC35G1 and STIM1. Interacts with CLN3; this interaction regulates the sodium/potassium-transporting ATPase complex localization at the plasma membrane. Interacts with SCN7A; activates ATP1A1 P-type sodium:potassium-exchanging transporter activity which indirectly signals to nearby neurons to regulate sodium homeostasis. Post-translationally, phosphorylation on Tyr-10 modulates pumping activity. Phosphorylation of Ser-943 by PKA modulates the response of ATP1A1 to PKC. Dephosphorylation by protein phosphatase 2A (PP2A) following increases in intracellular sodium, leading to increase catalytic activity. In terms of tissue distribution, expressed in endocardial endothelial cells.

The protein resides in the cell membrane. It localises to the basolateral cell membrane. Its subcellular location is the sarcolemma. The protein localises to the cell projection. It is found in the axon. The protein resides in the melanosome. It carries out the reaction K(+)(out) + Na(+)(in) + ATP + H2O = K(+)(in) + Na(+)(out) + ADP + phosphate + H(+). This is the catalytic component of the active enzyme, which catalyzes the hydrolysis of ATP coupled with the exchange of sodium and potassium ions across the plasma membrane. This action creates the electrochemical gradient of sodium and potassium ions, providing the energy for active transport of various nutrients. Could also be part of an osmosensory signaling pathway that senses body-fluid sodium levels and controls salt intake behavior as well as voluntary water intake to regulate sodium homeostasis. In Oryctolagus cuniculus (Rabbit), this protein is Sodium/potassium-transporting ATPase subunit alpha-1 (ATP1A1).